Consider the following 188-residue polypeptide: Elongation factor P (188 aa).

N6-(3,6-diaminohexanoyl)-5-hydroxylysine is present on K34.

Belongs to the elongation factor P family. In terms of processing, may be beta-lysylated on the epsilon-amino group of Lys-34 by the combined action of EpmA and EpmB, and then hydroxylated on the C5 position of the same residue by EpmC (if this protein is present). Lysylation is critical for the stimulatory effect of EF-P on peptide-bond formation. The lysylation moiety may extend toward the peptidyltransferase center and stabilize the terminal 3-CCA end of the tRNA. Hydroxylation of the C5 position on Lys-34 may allow additional potential stabilizing hydrogen-bond interactions with the P-tRNA.

It localises to the cytoplasm. It functions in the pathway protein biosynthesis; polypeptide chain elongation. Functionally, involved in peptide bond synthesis. Alleviates ribosome stalling that occurs when 3 or more consecutive Pro residues or the sequence PPG is present in a protein, possibly by augmenting the peptidyl transferase activity of the ribosome. Modification of Lys-34 is required for alleviation. The polypeptide is Elongation factor P (Klebsiella pneumoniae (strain 342)).